Reading from the N-terminus, the 436-residue chain is Tol-Pal system protein TolB (436 aa).

A signal peptide spans 1-28 (MRSFLKPLLTIAAMALGMTAVIPMPAWA).

This sequence belongs to the TolB family. In terms of assembly, the Tol-Pal system is composed of five core proteins: the inner membrane proteins TolA, TolQ and TolR, the periplasmic protein TolB and the outer membrane protein Pal. They form a network linking the inner and outer membranes and the peptidoglycan layer.

It is found in the periplasm. Part of the Tol-Pal system, which plays a role in outer membrane invagination during cell division and is important for maintaining outer membrane integrity. The chain is Tol-Pal system protein TolB from Mesorhizobium japonicum (strain LMG 29417 / CECT 9101 / MAFF 303099) (Mesorhizobium loti (strain MAFF 303099)).